We begin with the raw amino-acid sequence, 563 residues long: Germacrene C/D synthase (563 aa).

A disordered region spans residues 1-22; the sequence is MESCLSVSSAPPPKKNIQEPVR. 3 residues coordinate Mg(2+): aspartate 315, aspartate 319, and glutamate 468. Residues 315–319 carry the DDXXD motif motif; the sequence is DDTYD.

The protein belongs to the terpene synthase family. Mg(2+) serves as cofactor. In terms of tissue distribution, predominantly expressed in root.

It catalyses the reaction (2E,6E)-farnesyl diphosphate = germacrene C + diphosphate. It carries out the reaction (2E,6E)-farnesyl diphosphate = (-)-germacrene D + diphosphate. Its function is as follows. Mediates formation of germacrene C and germacrene D using farnesyl diphosphate as substrate. Can also catalyze formation of trace of germacrene B. The protein is Germacrene C/D synthase (TPS1) of Valeriana officinalis (Valerian).